Reading from the N-terminus, the 360-residue chain is Phospho-N-acetylmuramoyl-pentapeptide-transferase (360 aa).

A run of 10 helical transmembrane segments spans residues 26–46, 73–93, 97–117, 135–155, 168–188, 199–219, 236–256, 263–283, 288–308, and 338–358; these read AILG…ILIK, TMGG…WGDL, YVLV…IDDY, ALQS…STMV, IMPQ…VGAS, GLAI…AYLS, AGEL…FLWF, VFMG…IAIL, ILLV…ILQV, and VIVR…ATLK.

This sequence belongs to the glycosyltransferase 4 family. MraY subfamily. Mg(2+) is required as a cofactor.

Its subcellular location is the cell inner membrane. It catalyses the reaction UDP-N-acetyl-alpha-D-muramoyl-L-alanyl-gamma-D-glutamyl-meso-2,6-diaminopimeloyl-D-alanyl-D-alanine + di-trans,octa-cis-undecaprenyl phosphate = di-trans,octa-cis-undecaprenyl diphospho-N-acetyl-alpha-D-muramoyl-L-alanyl-D-glutamyl-meso-2,6-diaminopimeloyl-D-alanyl-D-alanine + UMP. The protein operates within cell wall biogenesis; peptidoglycan biosynthesis. Functionally, catalyzes the initial step of the lipid cycle reactions in the biosynthesis of the cell wall peptidoglycan: transfers peptidoglycan precursor phospho-MurNAc-pentapeptide from UDP-MurNAc-pentapeptide onto the lipid carrier undecaprenyl phosphate, yielding undecaprenyl-pyrophosphoryl-MurNAc-pentapeptide, known as lipid I. The chain is Phospho-N-acetylmuramoyl-pentapeptide-transferase from Shewanella frigidimarina (strain NCIMB 400).